Here is a 211-residue protein sequence, read N- to C-terminus: Peptide methionine sulfoxide reductase MsrA (211 aa).

Cys-52 is a catalytic residue.

The protein belongs to the MsrA Met sulfoxide reductase family.

It carries out the reaction L-methionyl-[protein] + [thioredoxin]-disulfide + H2O = L-methionyl-(S)-S-oxide-[protein] + [thioredoxin]-dithiol. It catalyses the reaction [thioredoxin]-disulfide + L-methionine + H2O = L-methionine (S)-S-oxide + [thioredoxin]-dithiol. Its function is as follows. Has an important function as a repair enzyme for proteins that have been inactivated by oxidation. Catalyzes the reversible oxidation-reduction of methionine sulfoxide in proteins to methionine. In Klebsiella pneumoniae (strain 342), this protein is Peptide methionine sulfoxide reductase MsrA.